Here is a 114-residue protein sequence, read N- to C-terminus: Large ribosomal subunit protein uL22 (114 aa).

Belongs to the universal ribosomal protein uL22 family. Part of the 50S ribosomal subunit.

Functionally, this protein binds specifically to 23S rRNA; its binding is stimulated by other ribosomal proteins, e.g. L4, L17, and L20. It is important during the early stages of 50S assembly. It makes multiple contacts with different domains of the 23S rRNA in the assembled 50S subunit and ribosome. Its function is as follows. The globular domain of the protein is located near the polypeptide exit tunnel on the outside of the subunit, while an extended beta-hairpin is found that lines the wall of the exit tunnel in the center of the 70S ribosome. The sequence is that of Large ribosomal subunit protein uL22 from Ehrlichia canis (strain Jake).